The following is a 584-amino-acid chain: Membrane frizzled-related protein (584 aa).

The Cytoplasmic segment spans residues 1–69; sequence MKDYDDVILR…QPDCHFSWFC (69 aa). A helical; Signal-anchor for type II membrane protein membrane pass occupies residues 70–90; the sequence is ILLLSGLLLLLLGLLVAVILA. Residues 91-584 are Extracellular-facing; the sequence is QLQATSLPRT…AASLEACSQP (494 aa). The disordered stretch occupies residues 108 to 140; it reads RGLTPMGVIPSTTPNTTTTTTTTTPARTGQQEA. Residues 119 to 132 are compositionally biased toward low complexity; that stretch reads TTPNTTTTTTTTTP. 2 disulfides stabilise this stretch: cysteine 150/cysteine 176 and cysteine 203/cysteine 222. One can recognise a CUB 1 domain in the interval 150 to 259; it reads CGGLLPGPSG…SGFQAWYQAV (110 aa). N-linked (GlcNAc...) asparagine glycosylation occurs at asparagine 233. The 37-residue stretch at 265-301 folds into the LDL-receptor class A 1 domain; it reads SCAHNEFHCDLLLCLKRDSVCDGITECADGSDEANCS. 5 disulfides stabilise this stretch: cysteine 266–cysteine 278, cysteine 273–cysteine 291, cysteine 285–cysteine 300, cysteine 307–cysteine 333, and cysteine 360–cysteine 383. Residues 307–420 form the CUB 2 domain; sequence CGGNLTGLYG…GGFLATYQAI (114 aa). An N-linked (GlcNAc...) asparagine glycan is attached at asparagine 421. In terms of domain architecture, LDL-receptor class A 2 spans 426-460; that stretch reads GCPWAEFCQSGGYRDLQWMCDLWKDCANDSNDNCS. 7 cysteine pairs are disulfide-bonded: cysteine 433/cysteine 451, cysteine 445/cysteine 459, cysteine 471/cysteine 533, cysteine 479/cysteine 526, cysteine 517/cysteine 554, cysteine 543/cysteine 581, and cysteine 547/cysteine 569. Asparagine 458 carries N-linked (GlcNAc...) asparagine glycosylation. The 119-residue stretch at 466–584 folds into the FZ domain; the sequence is QPDLTCEPVQ…AASLEACSQP (119 aa).

In terms of assembly, interacts with C1QTNF5. Expressed in retinal pigment epithelium and ciliary epithelium of the eye.

Its subcellular location is the apical cell membrane. Functionally, may play a role in eye development. The sequence is that of Membrane frizzled-related protein (Mfrp) from Mus musculus (Mouse).